We begin with the raw amino-acid sequence, 739 residues long: Phosphoribosylformylglycinamidine synthase subunit PurL (739 aa).

The active site involves H53. Residues Y56 and K95 each coordinate ATP. E97 lines the Mg(2+) pocket. Substrate is bound by residues 98–101 (SHNH) and R120. H99 (proton acceptor) is an active-site residue. Residue D121 coordinates Mg(2+). Substrate is bound at residue Q244. D274 serves as a coordination point for Mg(2+). 318–320 (ESQ) lines the substrate pocket. ATP contacts are provided by D501 and G538. Residue N539 coordinates Mg(2+). S541 lines the substrate pocket.

The protein belongs to the FGAMS family. Monomer. Part of the FGAM synthase complex composed of 1 PurL, 1 PurQ and 2 PurS subunits.

Its subcellular location is the cytoplasm. The catalysed reaction is N(2)-formyl-N(1)-(5-phospho-beta-D-ribosyl)glycinamide + L-glutamine + ATP + H2O = 2-formamido-N(1)-(5-O-phospho-beta-D-ribosyl)acetamidine + L-glutamate + ADP + phosphate + H(+). It participates in purine metabolism; IMP biosynthesis via de novo pathway; 5-amino-1-(5-phospho-D-ribosyl)imidazole from N(2)-formyl-N(1)-(5-phospho-D-ribosyl)glycinamide: step 1/2. In terms of biological role, part of the phosphoribosylformylglycinamidine synthase complex involved in the purines biosynthetic pathway. Catalyzes the ATP-dependent conversion of formylglycinamide ribonucleotide (FGAR) and glutamine to yield formylglycinamidine ribonucleotide (FGAM) and glutamate. The FGAM synthase complex is composed of three subunits. PurQ produces an ammonia molecule by converting glutamine to glutamate. PurL transfers the ammonia molecule to FGAR to form FGAM in an ATP-dependent manner. PurS interacts with PurQ and PurL and is thought to assist in the transfer of the ammonia molecule from PurQ to PurL. This Listeria monocytogenes serovar 1/2a (strain ATCC BAA-679 / EGD-e) protein is Phosphoribosylformylglycinamidine synthase subunit PurL.